The sequence spans 121 residues: Protein GAT4 (121 aa).

Residues 29-48 (EAQHGLPRNADSQPARPRTG) are disordered. The segment at 53 to 79 (CGQCGEIKTSLQWREGPNGAACLCNAC) adopts a GATA-type zinc-finger fold.

This Saccharomyces cerevisiae (strain ATCC 204508 / S288c) (Baker's yeast) protein is Protein GAT4 (GAT4).